The chain runs to 439 residues: FK506-binding protein 59 (439 aa).

PPIase FKBP-type domains lie at 32-120 (GCTV…LGWK) and 149-235 (GAFV…VDCG). 3 TPR repeats span residues 252 to 285 (AKVY…LPTT), 297 to 330 (VATH…DKNN), and 331 to 364 (VKAL…EPGN).

Interacts with inaD and trpl, and may be part of the inaD signaling complex. Expression in the embryo is limited to three tissues: lymph glands, Garland cells and oenocyte cells.

It catalyses the reaction [protein]-peptidylproline (omega=180) = [protein]-peptidylproline (omega=0). Functionally, may have a role in phototransduction; inhibits or prevents Ca(2+) induced stimulation of the trpl ion channel. This Drosophila melanogaster (Fruit fly) protein is FK506-binding protein 59.